The primary structure comprises 287 residues: MSTIDDLPPLREVIQRHDLSARKSLGQNFLLDLNLTTRIARAAGPLEDSTVIEVGPGPGGLTRALLALGAKRVIAIERDERALGALAEISAHYPGRLDIVCADAMTYDPRPLLGGARAKIVANLPYNIATPLLIGWLETDPWPPWYDCLVLMFQREVAERIVATEDDEAYGRLGVLANWRAQTKMLFDISPAAFVPPPKVTSSVVRLIPRDEPEPCNRRMLEQVTAAAFGQRRKMLRQSLKSLGVDPARLAAAAGVEPTRRAETIPVAGFVAMARELANIRGIKSEC.

The S-adenosyl-L-methionine site is built by asparagine 28, leucine 30, glycine 55, glutamate 77, aspartate 103, and asparagine 123.

The protein belongs to the class I-like SAM-binding methyltransferase superfamily. rRNA adenine N(6)-methyltransferase family. RsmA subfamily.

Its subcellular location is the cytoplasm. It carries out the reaction adenosine(1518)/adenosine(1519) in 16S rRNA + 4 S-adenosyl-L-methionine = N(6)-dimethyladenosine(1518)/N(6)-dimethyladenosine(1519) in 16S rRNA + 4 S-adenosyl-L-homocysteine + 4 H(+). Its function is as follows. Specifically dimethylates two adjacent adenosines (A1518 and A1519) in the loop of a conserved hairpin near the 3'-end of 16S rRNA in the 30S particle. May play a critical role in biogenesis of 30S subunits. This chain is Ribosomal RNA small subunit methyltransferase A, found in Rhodopseudomonas palustris (strain BisA53).